The following is a 67-amino-acid chain: Type 3 secretion system chaperone PscE (67 aa).

The stretch at 16–37 forms a coiled coil; the sequence is HAAALRQRLQAALAECRRELAR.

It belongs to the YscE family. Forms a stable ternary complex with PscF/SctF and PscG within the cytoplasm. Co-stabilized by PscG.

The protein resides in the cytoplasm. Its function is as follows. Chaperone of the type III secretion system (T3SS), also called injectisome, which is used to inject bacterial effector proteins into eukaryotic host cells, facilitating the establishment and dissemination of infection. Along with PscG, prevents premature polymerization of the PscF/SctF needle protein within the cytoplasm. Required for type III secretion needle assembly. Also required for cytotoxicity by influencing PscF/SctF levels. The chain is Type 3 secretion system chaperone PscE (pscE) from Pseudomonas aeruginosa (strain ATCC 15692 / DSM 22644 / CIP 104116 / JCM 14847 / LMG 12228 / 1C / PRS 101 / PAO1).